Consider the following 1016-residue polypeptide: EMILIN-1 (1016 aa).

The first 21 residues, 1 to 21 (MAPRTLWSCYLCCLLTAAAGA), serve as a signal peptide directing secretion. Residues 56–131 (HRNWCAYVVT…QGYGGDDCAE (76 aa)) form the EMI domain. 3 cysteine pairs are disulfide-bonded: Cys60–Cys121, Cys85–Cys92, and Cys120–Cys129. The interval 135 to 182 (PALGPASSTPRPLARPARPNLSGSSAGSPLSGLGGEGPGESEKVQQLE) is disordered. The segment covering 139-165 (PASSTPRPLARPARPNLSGSSAGSPLS) has biased composition (low complexity). An N-linked (GlcNAc...) asparagine glycan is attached at Asn154. Residues 216–256 (TAFNGRQQPADAAARPGVHETLNEIQHQLQLLDTRVSTHDQ) adopt a coiled-coil conformation. Disordered regions lie at residues 257–288 (ELGHLNNHHGGSSSSGGSRAPAPASAPPGPSE) and 383–402 (RGTELGGAAGQGGHPPGYTS). Positions 266 to 279 (GGSSSSGGSRAPAP) are enriched in low complexity. Residues 356–420 (PELGRRLAEL…EDRFNSTLGP (65 aa)) adopt a coiled-coil conformation. The segment covering 386–397 (ELGGAAGQGGHP) has biased composition (gly residues). A glycan (N-linked (GlcNAc...) asparagine) is linked at Asn415. The disordered stretch occupies residues 416–435 (STLGPSEEQEESWPGAPGGL). Asn455 and Asn561 each carry an N-linked (GlcNAc...) asparagine glycan. Residues 576–603 (AHGDEGCGACGGVQEELGRLRDGVERCS) are a coiled coil. Asn658 carries N-linked (GlcNAc...) asparagine glycosylation. The stretch at 685-752 (IISEINRLQQ…GLQGLREGLS (68 aa)) forms a coiled coil. Residues Asn766 and Asn794 are each glycosylated (N-linked (GlcNAc...) asparagine). Disordered regions lie at residues 811-863 (DLTG…VEGA) and 942-961 (RVDSGGYEPEGLENKPVAES). The region spanning 814-864 (GPAGEAGPPGPPGLQGPPGPAGPPGSPGKDGQEGPIGPPGPQGEQGVEGAP) is the Collagen-like domain. Residues 821–839 (PPGPPGLQGPPGPAGPPGS) are compositionally biased toward pro residues. Residues 835–857 (GPPGSPGKDGQEGPIGPPGPQGE) adopt a coiled-coil conformation. Residues 866–1013 (APVPQVAFSA…GALLYGDPEL (148 aa)) enclose the C1q domain.

In terms of assembly, homotrimer associated through a moderately stable interaction of the C-terminal globular C1q domains, allowing the nucleation of the triple helix and then a further quaternary assembly to higher-order polymers via intermolecular disulfide bonds. Interacts with EMILIN2. Interacts with EFEMP2; this interaction promotes the incorporation of EFEMP2 into the extracellular matrix. In terms of tissue distribution, distributed in tissues where resilience and elastic recoil are prominent. Highest levels in the adult small intestine, aorta, lung, uterus, and appendix and in the fetal spleen, kidney, lung, and heart; intermediate expression was detected in adult liver, ovary, colon, stomach, lymph node and spleen; adult heart, bladder, prostate, adrenal gland, mammary gland, placenta and kidney showed low expression whereas a series of other adult tissues, including skeletal muscle and different regions of adult brain show no expression. Detected in intramuscular nerve bundles, where it particularly localizes in the epineurium, the most external layer of dense connective tissue enclosing the nerve.

The protein resides in the secreted. It is found in the extracellular space. It localises to the extracellular matrix. Involved in elastic and collagen fibers formation. It is required for EFEMP2 deposition into the extracellular matrix, and collagen network assembly and cross-linking via protein-lysine 6-oxidase/LOX activity. May be responsible for anchoring smooth muscle cells to elastic fibers, and may be involved in the processes that regulate vessel assembly. Has cell adhesive capacity. This is EMILIN-1 (EMILIN1) from Homo sapiens (Human).